The primary structure comprises 164 residues: Cyclin-dependent kinase inhibitor 1 (164 aa).

Ser-2 is modified (N-acetylserine). Ser-2 participates in a covalent cross-link: Glycyl serine ester (Ser-Gly) (interchain with G-Cter in ubiquitin). A C4-type zinc finger spans residues 13-41; that stretch reads CGSKACRRLFGPVDSEQLSRDCDALMAGC. The segment at 17 to 24 is required for binding cyclins; that stretch reads ACRRLFGP. The required for binding CDKs stretch occupies residues 53-58; the sequence is FVTETP. The interval 76-164 is disordered; sequence LYLPTGPRRG…RRLIFSKRKP (89 aa). Thr-80 is modified (phosphothreonine; by LKB1). Ser-114 is modified (phosphoserine; by GSK3-beta). Phosphoserine is present on Ser-130. Residues 140 to 164 carry the PIP-box K+4 motif motif; sequence RKRRQTSMTDFYHSKRRLIFSKRKP. A Nuclear localization signal motif is present at residues 141-156; the sequence is KRRQTSMTDFYHSKRR. At Thr-145 the chain carries Phosphothreonine; by PKA, PKB/AKT1, PIM1 and PIM2. Ser-146 is subject to Phosphoserine; by PKC and NUAK1. The segment at 152 to 164 is interaction with TRIM39; the sequence is HSKRRLIFSKRKP. Over residues 153 to 164 the composition is skewed to basic residues; that stretch reads SKRRLIFSKRKP. A Phosphoserine; by PKC; in vitro modification is found at Ser-160.

The protein belongs to the CDI family. Interacts with HDAC1; the interaction is prevented by competitive binding of C10orf90/FATS to HDAC1 facilitating acetylation and protein stabilization of CDKN1A/p21. Interacts with MKRN1. Interacts with PSMA3. Interacts with PCNA. Component of the ternary complex, cyclin D-CDK4-CDKN1A. Interacts (via its N-terminal domain) with CDK4; the interaction promotes the assembly of the cyclin D-CDK4 complex, its nuclear translocation and promotes the cyclin D-dependent enzyme activity of CDK4. Binding to CDK2 leads to CDK2/cyclin E inactivation at the G1-S phase DNA damage checkpoint, thereby arresting cells at the G1-S transition during DNA repair. Interacts with PIM1. Interacts with STK11 and NUAK1. Interacts wih DTL. Interacts with isoform 1 and isoform 2 of TRIM39. Interacts with PKP3; the interaction sequesters CDKN1A to the cytoplasm thereby repressing its role as an inhibitor of CDK4- and CDK6-driven RB1 phosphorylation. Phosphorylation of Thr-145 by Akt or of Ser-146 by PKC impairs binding to PCNA. Phosphorylation at Ser-114 by GSK3-beta enhances ubiquitination by the DCX(DTL) complex. Phosphorylation of Thr-145 by PIM2 enhances CDKN1A stability and inhibits cell proliferation. Phosphorylation of Thr-145 by PIM1 results in the relocation of CDKN1A to the cytoplasm and enhanced CDKN1A protein stability. UV radiation-induced phosphorylation at Thr-80 by LKB1 and at Ser-146 by NUAK1 leads to its degradation. Post-translationally, ubiquitinated by MKRN1; leading to polyubiquitination and 26S proteasome-dependent degradation. Ubiquitinated by the DCX(DTL) complex, also named CRL4(CDT2) complex, leading to its degradation during S phase or following UV irradiation. Ubiquitination by the DCX(DTL) complex is essential to control replication licensing and is PCNA-dependent: interacts with PCNA via its PIP-box, while the presence of the containing the 'K+4' motif in the PIP box, recruit the DCX(DTL) complex, leading to its degradation. Ubiquitination at Ser-2 leads to degradation by the proteasome pathway. Ubiquitinated by RNF114; leading to proteasomal degradation. In terms of processing, acetylation leads to protein stability. Acetylated in vitro on Lys-141, Lys-154, Lys-161 and Lys-163. Deacetylation by HDAC1 is prevented by competitive binding of C10orf90/FATS to HDAC1. As to expression, expressed in all adult tissues, with 5-fold lower levels observed in the brain.

The protein localises to the cytoplasm. It is found in the nucleus. In terms of biological role, plays an important role in controlling cell cycle progression and DNA damage-induced G2 arrest. Involved in p53/TP53 mediated inhibition of cellular proliferation in response to DNA damage. Also involved in p53-independent DNA damage-induced G2 arrest mediated by CREB3L1 in astrocytes and osteoblasts. Binds to and inhibits cyclin-dependent kinase activity, preventing phosphorylation of critical cyclin-dependent kinase substrates and blocking cell cycle progression. Functions in the nuclear localization and assembly of cyclin D-CDK4 complex and promotes its kinase activity towards RB1. At higher stoichiometric ratios, inhibits the kinase activity of the cyclin D-CDK4 complex. Inhibits DNA synthesis by DNA polymerase delta by competing with POLD3 for PCNA binding. Negatively regulates the CDK4- and CDK6-driven phosphorylation of RB1 in keratinocytes, thereby resulting in the release of E2F1 and subsequent transcription of E2F1-driven G1/S phase promoting genes. The sequence is that of Cyclin-dependent kinase inhibitor 1 from Homo sapiens (Human).